The following is a 722-amino-acid chain: Threonine--tRNA ligase 1, cytoplasmic (722 aa).

Residues 1-10 (MSQEKASSPS) show a composition bias toward polar residues. Residues 1–48 (MSQEKASSPSGKMDGEKPVDASEEKRKEGGKKKSKDGGGDGGRAELNP) form a disordered region. Over residues 13-27 (MDGEKPVDASEEKRK) the composition is skewed to basic and acidic residues. The region spanning 78 to 142 (DSKPIKVTLP…ETDCTLELLK (65 aa)) is the TGS domain. The residue at position 242 (Lys242) is an N6-acetyllysine. Residue Thr245 is modified to Phosphothreonine. Tyr297 carries the phosphotyrosine modification. Thr452 carries the phosphothreonine modification.

The protein belongs to the class-II aminoacyl-tRNA synthetase family. As to quaternary structure, homodimer. ISGylated.

The protein resides in the cytoplasm. It carries out the reaction tRNA(Thr) + L-threonine + ATP = L-threonyl-tRNA(Thr) + AMP + diphosphate + H(+). In terms of biological role, catalyzes the attachment of threonine to tRNA(Thr) in a two-step reaction: threonine is first activated by ATP to form Thr-AMP and then transferred to the acceptor end of tRNA(Thr). Also edits incorrectly charged tRNA(Thr) via its editing domain, at the post-transfer stage. The sequence is that of Threonine--tRNA ligase 1, cytoplasmic (Tars1) from Mus musculus (Mouse).